The primary structure comprises 174 residues: Flavodoxin (174 aa).

The Flavodoxin-like domain maps to 4-165; sequence VGLFYGSDTG…RVEKWCKQIY (162 aa).

The protein belongs to the flavodoxin family. FMN is required as a cofactor.

Functionally, low-potential electron donor to a number of redox enzymes. The protein is Flavodoxin (fldA) of Haemophilus influenzae (strain ATCC 51907 / DSM 11121 / KW20 / Rd).